Reading from the N-terminus, the 143-residue chain is MKEETIFFFKEDTQYQLRQRAEIRTWLNTIAKKEKYSILELNYIFCSDEYLLQMNRDFLDHDYYTDIITFDNSEVKGKIEGDIFISIDRVKDNAQLQHSTVKDELHRVLAHGLLHLTGYKDKTTKEKEMMRAKEDASLSLRKF.

Residues His-111, His-115, and Asp-121 each coordinate Zn(2+).

It belongs to the endoribonuclease YbeY family. Zn(2+) serves as cofactor.

Its subcellular location is the cytoplasm. In terms of biological role, single strand-specific metallo-endoribonuclease involved in late-stage 70S ribosome quality control and in maturation of the 3' terminus of the 16S rRNA. The sequence is that of Endoribonuclease YbeY from Cytophaga hutchinsonii (strain ATCC 33406 / DSM 1761 / CIP 103989 / NBRC 15051 / NCIMB 9469 / D465).